The following is a 66-amino-acid chain: uncharacterized protein (66 aa).

2 helical membrane passes run 5–25 (ALIV…PLVN) and 30–50 (IMFG…VTPL).

The protein resides in the cell membrane. This is an uncharacterized protein from Bacillus subtilis (strain 168).